Reading from the N-terminus, the 157-residue chain is MLSISPIVSLRRCDNEPSMPDEWRLYNLATRLRTFSNWPFTEDCACTPERMAEAGFVHCPTDNSPDVVKCFFCLKELEGWQPEDDPMDEHKKHSPSCLFIALKKKAEELTLSEFLKLDLEHMKIKMQKQMNLHIERFQAKANEVRGHLEKLDADETQ.

One copy of the BIR repeat lies at 31 to 101 (RLRTFSNWPF…KHSPSCLFIA (71 aa)). Residue threonine 47 is modified to Phosphothreonine; by CDK1. The Zn(2+) site is built by cysteine 70, cysteine 73, histidine 90, and cysteine 97.

The protein belongs to the IAP family. Component of the CPC at least composed of survivin/birc5, incenp, cdca8/borealin and/or cdca9/dasra-A, and aurkb/aurora-B. Interacts directly with incenp (via N-terminus). Interacts with rxra; the interaction is stronger in the absence of 9-cis retinoic acids. In terms of processing, ubiquitination is required for centrosome-targeting. Exhibits strong and homogeneous expression in developing oocytes. In embryos, expressed in the animal hemisphere from one-cell to yolk plug stages, and highly expressed in the future brain and dorsal region of the neural tube at the neurula stage and early tail-bud stage. At tadpole stages, expression is restricted at a low level to the head region.

The protein resides in the cytoplasm. The protein localises to the nucleus. Its subcellular location is the chromosome. It is found in the centromere. It localises to the cytoskeleton. The protein resides in the spindle. In terms of biological role, does not appear to exhibit anti-apoptotic activity. Plays a role in increasing blood vessel size during development. Component of the chromosomal passenger complex (CPC), a complex that acts as a key regulator of mitosis. The CPC complex has essential functions at the centromere in ensuring correct chromosome alignment and segregation and is required for chromatin-induced microtubule stabilization and spindle assembly. The sequence is that of Baculoviral IAP repeat-containing protein 5.2-B (birc5.2-b) from Xenopus laevis (African clawed frog).